Consider the following 159-residue polypeptide: Regulator of G-protein signaling 13 (159 aa).

An RGS domain is found at 34-150 (SFENLMATKY…LKSEMYQKLL (117 aa)).

Inhibits signal transduction by increasing the GTPase activity of G protein alpha subunits thereby driving them into their inactive GDP-bound form. Binds to both G(i)-alpha and G(q)-alpha. The protein is Regulator of G-protein signaling 13 (RGS13) of Homo sapiens (Human).